The sequence spans 196 residues: Adenosylcobinamide-phosphate guanylyltransferase (196 aa).

In terms of assembly, homodimer.

The enzyme catalyses adenosylcob(III)inamide phosphate + GTP + H(+) = adenosylcob(III)inamide-GDP + diphosphate. It participates in cofactor biosynthesis; adenosylcobalamin biosynthesis. Functionally, guanylyltransferase that catalyzes the synthesis of adenosylcobinamide-GDP (AdoCbi-GDP) from adenosylcobinamide-phosphate (AdoCbi-P) and GTP. Is involved in adenosylcobalamin biosynthesis. Binds one GTP per dimer. Cannot use other NTPs or GDP. Does not display AdoCbi kinase activity. Is also able to catalyze the condensation of 2-phospho-L-lactate (LP) with GTP in vitro to form PPi and (2S)-lactyl-2-diphospho-5'-guanosine (LPPG), but is much less efficient than CofC, the presumed enzyme catalyzing this reaction in vivo. This chain is Adenosylcobinamide-phosphate guanylyltransferase (cobY), found in Methanocaldococcus jannaschii (strain ATCC 43067 / DSM 2661 / JAL-1 / JCM 10045 / NBRC 100440) (Methanococcus jannaschii).